The chain runs to 503 residues: MPSKTKYNLVDDGHDLRIPLHNEDAFQHGISFEAKYVGSLDVPRPNSRVEIVAAMRRIRYEFKAKNIKKKKVSIMVSVDGVKVILKKKKKKKEWTWDESKMLVMQDPIYRIFYVSHDSQDLKIFSYIARDGASNIFRCNVFKSKKKSQAMRIVRTVGQAFEVCHKLSLQHTQQNADGQEDGESERNSDGSGDPGRQLTGAERVSTATAEETDIDAVEVPLPGNDILEFSRGVTDLDAIGKDGGSHIDTTVSPHPQEPMLAASPRMLLPSSSSSKPPGLGTGTPLSTHHQMQLLQQLLQQQQQQTQVAVAQVHLLKDQLAAEAAARLEAQARVHQLLLQNKDMLQHISLLVKQVQELELKLSGQSTMGSQDSLLEITFRSGALPVLCESTTPKPEDLHSPLLGAGLADFAHPVGSPLGRRDCLVKLECFRFLPAEDNQPMAQGEPLLGGLELIKFRESGIASEYESNTDESEERDSWSQEELPRLLNVLQRQELGDSLDDEIAV.

Residues 26 to 191 (FQHGISFEAK…ESERNSDGSG (166 aa)) enclose the PID domain. The segment at 170-212 (HTQQNADGQEDGESERNSDGSGDPGRQLTGAERVSTATAEETD) is disordered. Ser-183, Ser-187, Ser-190, and Ser-262 each carry phosphoserine. Residues 266–285 (LLPSSSSSKPPGLGTGTPLS) are disordered. Positions 319-360 (AAEAAARLEAQARVHQLLLQNKDMLQHISLLVKQVQELELKL) form a coiled coil. Phosphoserine occurs at positions 368, 371, 398, and 414. The interaction with NOS1 stretch occupies residues 491 to 503 (QELGDSLDDEIAV). The short motif at 501 to 503 (IAV) is the PDZ-binding element.

In terms of assembly, interacts with the PDZ domain of NOS1 or the second PDZ domain of DLG4 through its C-terminus. Interacts with RASD1 and SYN1, SYN2 and SYN3 via its PID domain. Forms a ternary complex with NOS1 and RASD1. Forms a ternary complex with NOS1 and SYN1. As to expression, mainly expressed in brain. Highly expressed in accessory olfactory bulb, caudate-putamen, cerebellum, cerebral cortex, dentate gyrus of the hippocampus, islands of Calleja, olfactory bulb and supraoptic nucleus. Expressed in kidney glomeruli podocytes (at protein level).

It localises to the cell projection. Its subcellular location is the filopodium. The protein resides in the podosome. In terms of biological role, adapter protein involved in neuronal nitric-oxide (NO) synthesis regulation via its association with nNOS/NOS1. The complex formed with NOS1 and synapsins is necessary for specific NO and synapsin functions at a presynaptic level. Mediates an indirect interaction between NOS1 and RASD1 leading to enhance the ability of NOS1 to activate RASD1. Competes with DLG4 for interaction with NOS1, possibly affecting NOS1 activity by regulating the interaction between NOS1 and DLG4. In kidney podocytes, plays a role in podosomes and filopodia formation through CDC42 activation. The sequence is that of Carboxyl-terminal PDZ ligand of neuronal nitric oxide synthase protein from Rattus norvegicus (Rat).